Here is a 78-residue protein sequence, read N- to C-terminus: Acyl carrier protein (78 aa).

The 76-residue stretch at 2–77 folds into the Carrier domain; it reads STIEERVKKI…AAIDYIEAAN (76 aa). At serine 37 the chain carries O-(pantetheine 4'-phosphoryl)serine.

Belongs to the acyl carrier protein (ACP) family. In terms of processing, 4'-phosphopantetheine is transferred from CoA to a specific serine of apo-ACP by AcpS. This modification is essential for activity because fatty acids are bound in thioester linkage to the sulfhydryl of the prosthetic group.

Its subcellular location is the cytoplasm. It participates in lipid metabolism; fatty acid biosynthesis. Its function is as follows. Carrier of the growing fatty acid chain in fatty acid biosynthesis. In Edwardsiella ictaluri (strain 93-146), this protein is Acyl carrier protein.